Consider the following 207-residue polypeptide: Ribonuclease HII (207 aa).

Residues 12 to 201 (DLVAGVDEVG…VRAAWEVREG (190 aa)) enclose the RNase H type-2 domain. Positions 18, 19, and 110 each coordinate a divalent metal cation.

Belongs to the RNase HII family. The cofactor is Mn(2+). It depends on Mg(2+) as a cofactor.

The protein resides in the cytoplasm. It catalyses the reaction Endonucleolytic cleavage to 5'-phosphomonoester.. Functionally, endonuclease that specifically degrades the RNA of RNA-DNA hybrids. The protein is Ribonuclease HII of Pseudomonas putida (strain ATCC 700007 / DSM 6899 / JCM 31910 / BCRC 17059 / LMG 24140 / F1).